Consider the following 426-residue polypeptide: MLTIKDVHALEVMDSRGNPTIQASVILSDNTKASAIVPSGASTGKREALELRDNDKTRFLGKGVLRACENVNSVIKHHLIGLEATSQAFVDERLRALDGTPNYANLGANAVLGVSMALARASAKALNLPLYRYLGGANALTLPVPMLNIINGGTHANNSIDFQEYMIMPLGFESFREALRASAEVYHTLKKLLDGKNQLTSVGDEGGFAPNFNNNVEPLEAISQAIEKAGYKLGEEIALALDVASSELVDGNFNYHLKGENKILDSHELVAYYKELVAKYPIVSIEDGLSEDDWEGWAFLSKELGRQIQLVGDDLFVTNASILQKGIEKNVANAILIKPNQIGTISETLETIRLAKHHAYQCVMSHRSGESEDSFIADFAVALNTGEIKTGSTARSERIAKYNRLLEIEHELKGGIYIGKELFKHG.

Glutamine 163 contacts (2R)-2-phosphoglycerate. Glutamate 205 acts as the Proton donor in catalysis. Positions 242, 286, and 313 each coordinate Mg(2+). 4 residues coordinate (2R)-2-phosphoglycerate: lysine 338, arginine 367, serine 368, and lysine 389. The active-site Proton acceptor is lysine 338.

Belongs to the enolase family. Requires Mg(2+) as cofactor.

It localises to the cytoplasm. Its subcellular location is the secreted. The protein localises to the cell surface. It carries out the reaction (2R)-2-phosphoglycerate = phosphoenolpyruvate + H2O. It participates in carbohydrate degradation; glycolysis; pyruvate from D-glyceraldehyde 3-phosphate: step 4/5. Functionally, catalyzes the reversible conversion of 2-phosphoglycerate (2-PG) into phosphoenolpyruvate (PEP). It is essential for the degradation of carbohydrates via glycolysis. The sequence is that of Enolase from Helicobacter pylori (strain P12).